Consider the following 468-residue polypeptide: MRTFSGKRSTLALAIAGVTAMSGFMAMPEARAEGFIDDSTLTGGIYYWQRERDRKDVTDGDKYKTNLSHSTWNANLDFQSGYAADMFGLDIAAFTAIEMAENGDSSHPNEIAFSKSNKAYDEDWSGDKSGISLYKAAAKFKYGPVWARAGYIQPTGQTLLAPHWSFMPGTYQGAEAGANFDYGDAGALSFSYMWTNEYKAPWHLEMDEFYQNDKTTKVDYLHSFGAKYDFKNNFVLEAAFGQAEGYIDQYFAKASYKFDIAGSPLTTSYQFYGTRDKVDDRSVNDLYDGTAWLQALTFGYRAADVVDLRLEGTWVKADGQQGYFLQRMTPTYASSNGRLDIWWDNRSDFNANGEKAVFFGAMYDLKNWNLPGFAIGASYVYAWDAKPATWQSNPDAYYDKNRTIEESAYSLDAVYTIQDGRAKGTMFKLHFTEYDNHSDIPSWGGGYGNIFQDERDVKFMVIAPFTIF.

Residues 1–32 (MRTFSGKRSTLALAIAGVTAMSGFMAMPEARA) form the signal peptide.

It belongs to the outer membrane porin (Opr) (TC 1.B.25) family.

It localises to the cell outer membrane. In terms of biological role, involved in the uptake of chitosugars. This is Chitoporin (chiP) from Escherichia coli (strain K12).